The following is a 430-amino-acid chain: Adenylosuccinate synthetase (430 aa).

Residues 11–17 (GDEGKGK) and 39–41 (GHS) each bind GTP. Catalysis depends on Asp12, which acts as the Proton acceptor. The Mg(2+) site is built by Asp12 and Gly39. IMP contacts are provided by residues 12–15 (DEGK), 37–40 (NAGH), Thr129, Arg143, Asn221, Thr236, and Arg300. His40 acts as the Proton donor in catalysis. Substrate is bound at residue 296–302 (VSTGRKR). GTP contacts are provided by residues Arg302, 328–330 (KLD), and 412–414 (GTG).

The protein belongs to the adenylosuccinate synthetase family. Homodimer. Mg(2+) serves as cofactor.

It is found in the cytoplasm. The enzyme catalyses IMP + L-aspartate + GTP = N(6)-(1,2-dicarboxyethyl)-AMP + GDP + phosphate + 2 H(+). It participates in purine metabolism; AMP biosynthesis via de novo pathway; AMP from IMP: step 1/2. In terms of biological role, plays an important role in the de novo pathway and in the salvage pathway of purine nucleotide biosynthesis. Catalyzes the first committed step in the biosynthesis of AMP from IMP. The chain is Adenylosuccinate synthetase from Sordaria macrospora (strain ATCC MYA-333 / DSM 997 / K(L3346) / K-hell).